The primary structure comprises 559 residues: Formate--tetrahydrofolate ligase (559 aa).

68 to 75 serves as a coordination point for ATP; sequence TPAGEGKT.

The protein belongs to the formate--tetrahydrofolate ligase family.

The catalysed reaction is (6S)-5,6,7,8-tetrahydrofolate + formate + ATP = (6R)-10-formyltetrahydrofolate + ADP + phosphate. The protein operates within one-carbon metabolism; tetrahydrofolate interconversion. This is Formate--tetrahydrofolate ligase from Rhizobium etli (strain ATCC 51251 / DSM 11541 / JCM 21823 / NBRC 15573 / CFN 42).